A 148-amino-acid polypeptide reads, in one-letter code: MAESDWDTVTVLRKKGPTAAQAKSKQAILAAQRRGEDVETSKKWAAGQNKQHSITKNTAKLDRETEELHHDRVTLEVGKVIQQGRQSKGLTQKDLATKINEKPQVIADYESGRAIPNNQVLGKIERAIGLKLRGKDIGKPIEKGPRAK.

An N-acetylalanine modification is found at Ala2. Ser4 carries the post-translational modification Phosphoserine. Lys25 carries the post-translational modification N6-methyllysine. Over residues 33–42 (RRGEDVETSK) the composition is skewed to basic and acidic residues. Residues 33-66 (RRGEDVETSKKWAAGQNKQHSITKNTAKLDRETE) are disordered. The interaction with NR5A2, PPARG and NR1H3 stretch occupies residues 37–113 (DVETSKKWAA…QVIADYESGR (77 aa)). The segment covering 48–58 (QNKQHSITKNT) has biased composition (polar residues). The tract at residues 69 to 108 (HHDRVTLEVGKVIQQGRQSKGLTQKDLATKINEKPQVIAD) is interaction with TBP and NR5A1. The IQ motif signature appears at 81 to 88 (IQQGRQSK). The HTH cro/C1-type domain maps to 81-135 (IQQGRQSKGLTQKDLATKINEKPQVIADYESGRAIPNNQVLGKIERAIGLKLRGK). Residues 92–111 (QKDLATKINEKPQVIADYES) constitute a DNA-binding region (H-T-H motif).

In terms of assembly, interacts with TBP and the transcription factor IID (TFIID) complex, NR5A2, NR1H3 and PPARG. Interaction with TBP is regulated by phosphorylation. Binds NR5A1, ATF1, FOS and JUN via their conserved basic region. Binding to calmodulin is regulated by calcium and phosphorylation of the IQ motif. In terms of processing, phosphorylated (by PKA and PKC). Expressed in brain, liver, lung, kidney and heart (at protein level). Ubiquitously expressed. More abundant in heart, pancreas, liver, intestine and adipose tissues.

Its subcellular location is the cytoplasm. The protein localises to the nucleus. Its function is as follows. Transcriptional coactivator stimulating NR5A1 and ligand-dependent NR1H3/LXRA and PPARG transcriptional activities. Enhances the DNA-binding activity of ATF1, ATF2, CREB1 and NR5A1. Regulates nitric oxid synthase activity probably by sequestering calmodulin in the cytoplasm. May function in endothelial cells differentiation, hormone-induced cardiomyocytes hypertrophy and lipid metabolism. In Homo sapiens (Human), this protein is Endothelial differentiation-related factor 1 (EDF1).